We begin with the raw amino-acid sequence, 350 residues long: uncharacterized protein (350 aa).

This is an uncharacterized protein from Sulfolobus islandicus filamentous virus (isolate Iceland/Hveragerdi) (SIFV).